The primary structure comprises 406 residues: Putative cfxQ-like protein R730 (406 aa).

Residues 1-37 (MKRSHDSITRSINSDNDSETNMNSDNNNNNKPNQRKK) are disordered. Over residues 13-32 (NSDNDSETNMNSDNNNNNKP) the composition is skewed to low complexity. ATP is bound at residue 173 to 180 (GPPGVGKS).

It belongs to the CbxX/CfxQ family.

This chain is Putative cfxQ-like protein R730, found in Acanthamoeba polyphaga mimivirus (APMV).